The sequence spans 164 residues: Methanogen homoaconitase small subunit 2 (164 aa).

The short motif at 26–29 is the YLRT element; that stretch reads YLRT.

Belongs to the LeuD family. LeuD type 2 subfamily. In terms of assembly, heterotetramer of 2 HacA and 2 HacB proteins. Cannot form a complex with LeuC.

The enzyme catalyses (2R)-homocitrate = (2R,3S)-homoisocitrate. It catalyses the reaction (2R)-homocitrate = cis-homoaconitate + H2O. The catalysed reaction is (2R,3S)-homoisocitrate = cis-homoaconitate + H2O. It carries out the reaction cis-(homo)2aconitate + H2O = (2R,3S)-iso(homo)2citrate. The enzyme catalyses cis-(homo)3aconitate + H2O = (2R,3S)-iso(homo)3citrate. It participates in organic acid metabolism; 2-oxosuberate biosynthesis. Component of a hydro-lyase with broad substrate specificity for cis-unsaturated tricarboxylic acids. Catalyzes both the reversible dehydration of (R)-homocitrate ((R)-2-hydroxybutane-1,2,4-tricarboxylate) to produce cis-homoaconitate ((Z)-but-1-ene-1,2,4-tricarboxylate), and its hydration to homoisocitrate ((1R,2S)-1-hydroxybutane-1,2,4-tricarboxylate). Is also able to hydrate the analogous longer chain substrates cis-homo(2)-aconitate, cis-homo(3)-aconitate. These reactions are part of the biosynthesis pathway of coenzyme B. This Methanosarcina acetivorans (strain ATCC 35395 / DSM 2834 / JCM 12185 / C2A) protein is Methanogen homoaconitase small subunit 2 (hacB2).